The primary structure comprises 187 residues: UPF0301 protein Cpha266_0885 (187 aa).

The protein belongs to the UPF0301 (AlgH) family.

The chain is UPF0301 protein Cpha266_0885 from Chlorobium phaeobacteroides (strain DSM 266 / SMG 266 / 2430).